The chain runs to 246 residues: Sugar fermentation stimulation protein homolog (246 aa).

The protein belongs to the SfsA family.

The protein is Sugar fermentation stimulation protein homolog of Prochlorococcus marinus (strain MIT 9301).